A 1409-amino-acid chain; its full sequence is Inositol hexakisphosphate and diphosphoinositol-pentakisphosphate kinase 1 (1409 aa).

Residue 64-65 coordinates substrate; sequence KK. ATP-binding positions include R145, K198, H205, R224, 248–251, and 257–259; these read EEFM and DVK. Substrate is bound at residue 224 to 225; that stretch reads RK. K259 and R273 together coordinate substrate. ATP is bound by residues S275, D320, and 332–334; that span reads DVN. 337–340 is a substrate binding site; sequence SFVK. The polyphosphoinositide-binding domain stretch occupies residues 382–453; sequence PTTSGTMMEL…VLDITRLLLA (72 aa). Residues 891–996 are disordered; sequence GVEEEGSAPA…PTEMKQSGLG (106 aa). A phosphoserine mark is found at S920 and S963. Residues 981-996 are compositionally biased toward polar residues; the sequence is FSSSRPPTEMKQSGLG. Phosphoserine is present on residues S1013 and S1049. Over residues 1110-1119 the composition is skewed to polar residues; the sequence is MHSSQASDNP. Residues 1110-1183 form a disordered region; the sequence is MHSSQASDNP…PSLNSHVAEE (74 aa). Residues S1121 and S1128 each carry the phosphoserine modification. Low complexity predominate over residues 1144–1162; it reads SSGPSSTVSSAGPSSPTTV. Positions 1163-1178 are enriched in polar residues; the sequence is DGNSQFGFSDQPSLNS.

It belongs to the histidine acid phosphatase family. VIP1 subfamily.

Its subcellular location is the cytoplasm. The protein localises to the cytosol. The protein resides in the cell membrane. It carries out the reaction 1D-myo-inositol hexakisphosphate + ATP = 1-diphospho-1D-myo-inositol 2,3,4,5,6-pentakisphosphate + ADP. The catalysed reaction is 5-diphospho-1D-myo-inositol 1,2,3,4,6-pentakisphosphate + ATP + H(+) = 1,5-bis(diphospho)-1D-myo-inositol 2,3,4,6-tetrakisphosphate + ADP. Bifunctional inositol kinase that acts in concert with the IP6K kinases IP6K1, IP6K2 and IP6K3 to synthesize the diphosphate group-containing inositol pyrophosphates diphosphoinositol pentakisphosphate, PP-InsP5, and bis-diphosphoinositol tetrakisphosphate, (PP)2-InsP4. PP-InsP5 and (PP)2-InsP4, also respectively called InsP7 and InsP8, regulate a variety of cellular processes, including apoptosis, vesicle trafficking, cytoskeletal dynamics, exocytosis, insulin signaling and neutrophil activation. Phosphorylates inositol hexakisphosphate (InsP6) at position 1 to produce PP-InsP5 which is in turn phosphorylated by IP6Ks to produce (PP)2-InsP4. Alternatively, phosphorylates PP-InsP5 at position 1, produced by IP6Ks from InsP6, to produce (PP)2-InsP4. Activated when cells are exposed to hyperosmotic stress. The sequence is that of Inositol hexakisphosphate and diphosphoinositol-pentakisphosphate kinase 1 from Pongo abelii (Sumatran orangutan).